Reading from the N-terminus, the 237-residue chain is tRNA (guanine-N(7)-)-methyltransferase (237 aa).

E67, E92, D119, and D141 together coordinate S-adenosyl-L-methionine. D141 is an active-site residue. Substrate-binding positions include K145, D177, and 214 to 217; that span reads TRYE.

Belongs to the class I-like SAM-binding methyltransferase superfamily. TrmB family.

It catalyses the reaction guanosine(46) in tRNA + S-adenosyl-L-methionine = N(7)-methylguanosine(46) in tRNA + S-adenosyl-L-homocysteine. Its pathway is tRNA modification; N(7)-methylguanine-tRNA biosynthesis. Its function is as follows. Catalyzes the formation of N(7)-methylguanine at position 46 (m7G46) in tRNA. This Ruegeria pomeroyi (strain ATCC 700808 / DSM 15171 / DSS-3) (Silicibacter pomeroyi) protein is tRNA (guanine-N(7)-)-methyltransferase.